Here is a 279-residue protein sequence, read N- to C-terminus: uncharacterized protein (279 aa).

Residues 1-19 (MKLKLYLIPLLASGIILSA) form the signal peptide. C20 is lipidated: N-palmitoyl cysteine. The S-diacylglycerol cysteine moiety is linked to residue C20.

It belongs to the MG439/MG440 family.

It localises to the cell membrane. This is an uncharacterized protein from Mycoplasma pneumoniae (strain ATCC 29342 / M129 / Subtype 1) (Mycoplasmoides pneumoniae).